We begin with the raw amino-acid sequence, 237 residues long: MTTSYLTFLAVAVGPPLVALGVVRAARWDGDRARAAGVGILLALALSYTTPWDNYLIATGVWWYGEGTVVGRLWQMPIEEYLFVITQTLLTGLWVQALPLRPTAGFSPTRRDAVLGALAGVLVGCGGAVLLTVDATFYIGAIIAWAAPVLALQWAVGWRYLWRRRRVFAAAVLVPTLFLSAADRYAIADGIWILAGQYTTGITVLGLPIEEGAFFFVTNVFVSQGLILYAWVLARWR.

7 consecutive transmembrane segments (helical) span residues 3–23, 38–58, 80–100, 113–133, 137–157, 170–192, and 213–233; these read TSYL…LGVV, VGIL…YLIA, EYLF…ALPL, AVLG…LLTV, FYIG…WAVG, AAVL…DGIW, and AFFF…AWVL.

Belongs to the lycopene beta-cyclase family.

The protein localises to the cell membrane. The catalysed reaction is a carotenoid psi-end group = a carotenoid beta-end derivative. It carries out the reaction all-trans-lycopene = gamma-carotene. The enzyme catalyses gamma-carotene = all-trans-beta-carotene. It participates in carotenoid biosynthesis; beta-carotene biosynthesis. Functionally, catalyzes the cyclization of both ends of lycopene to form beta-carotene, a retinal precursor. Is required for bacteriorhodopsin biogenesis, a light-driven proton pump with a covalently bound retinal cofactor. The chain is Lycopene beta-cyclase from Halobacterium salinarum (strain ATCC 29341 / DSM 671 / R1).